Consider the following 378-residue polypeptide: Ribosomal RNA large subunit methyltransferase G (378 aa).

The protein belongs to the methyltransferase superfamily. RlmG family.

The protein localises to the cytoplasm. The catalysed reaction is guanosine(1835) in 23S rRNA + S-adenosyl-L-methionine = N(2)-methylguanosine(1835) in 23S rRNA + S-adenosyl-L-homocysteine + H(+). Functionally, specifically methylates the guanine in position 1835 (m2G1835) of 23S rRNA. The protein is Ribosomal RNA large subunit methyltransferase G of Salmonella arizonae (strain ATCC BAA-731 / CDC346-86 / RSK2980).